The following is a 442-amino-acid chain: Chitinase-like protein Idgf4 (442 aa).

An N-terminal signal peptide occupies residues 1-21; the sequence is MKLYALFSLLVGSLAIGQISA. The region spanning 25–442 is the GH18 domain; that stretch reads HHLLCYYDGN…PILRQVKSKL (418 aa). A disulfide bridge connects residues Cys29 and Cys56. Residue Asn224 is glycosylated (N-linked (GlcNAc...) asparagine). Cys343 and Cys426 form a disulfide bridge.

It belongs to the glycosyl hydrolase 18 family. IDGF subfamily. In terms of processing, glycosylated. In terms of tissue distribution, primarily expressed in yolk cells and fat body. In larvae, it is expressed in the imaginal ring, the salivary duct, large salivary gland cells and weakly expressed in imaginal disks. More strongly expressed than Idgf1 and Idgf3.

Its subcellular location is the secreted. Functionally, cooperates with insulin-like peptides to stimulate the proliferation, polarization and motility of imaginal disk cells. May act by stabilizing the binding of insulin-like peptides to its receptor through a simultaneous interaction with both molecules to form a multiprotein signaling complex. This chain is Chitinase-like protein Idgf4 (Idgf4), found in Drosophila melanogaster (Fruit fly).